A 470-amino-acid polypeptide reads, in one-letter code: Glutamate--tRNA ligase (470 aa).

A 'HIGH' region motif is present at residues 12-22; sequence PSPTGIFHVGG. Residues Cys-103, Cys-105, Cys-125, and Asp-127 each contribute to the Zn(2+) site. The 'KMSKS' region signature appears at 236-240; sequence KLSKR. ATP is bound at residue Lys-239.

Belongs to the class-I aminoacyl-tRNA synthetase family. Glutamate--tRNA ligase type 1 subfamily. In terms of assembly, monomer. It depends on Zn(2+) as a cofactor.

Its subcellular location is the cytoplasm. It catalyses the reaction tRNA(Glu) + L-glutamate + ATP = L-glutamyl-tRNA(Glu) + AMP + diphosphate. In terms of biological role, catalyzes the attachment of glutamate to tRNA(Glu) in a two-step reaction: glutamate is first activated by ATP to form Glu-AMP and then transferred to the acceptor end of tRNA(Glu). This Frankia casuarinae (strain DSM 45818 / CECT 9043 / HFP020203 / CcI3) protein is Glutamate--tRNA ligase.